Here is a 284-residue protein sequence, read N- to C-terminus: Nucleotide-binding protein Shal_3708 (284 aa).

8–15 contacts ATP; that stretch reads GRSGSGKS. 56–59 is a binding site for GTP; sequence DIRN.

Belongs to the RapZ-like family.

Functionally, displays ATPase and GTPase activities. This chain is Nucleotide-binding protein Shal_3708, found in Shewanella halifaxensis (strain HAW-EB4).